Consider the following 123-residue polypeptide: MPTINQLIRKERKKVVKRKKTPALQACPQRRGVCTRVYTTTPKKPNSALRKVARVRLTNGLEVTAYIPGEGHNLQEHSVVMIRGGRVKDLPGVRYHIVRGTLDTSGVQDRRQGRSKYGAKRPK.

Asp89 carries the 3-methylthioaspartic acid modification. The disordered stretch occupies residues 103–123 (DTSGVQDRRQGRSKYGAKRPK). A compositionally biased stretch (basic residues) spans 113-123 (GRSKYGAKRPK).

It belongs to the universal ribosomal protein uS12 family. In terms of assembly, part of the 30S ribosomal subunit. Contacts proteins S8 and S17. May interact with IF1 in the 30S initiation complex.

Its function is as follows. With S4 and S5 plays an important role in translational accuracy. Functionally, interacts with and stabilizes bases of the 16S rRNA that are involved in tRNA selection in the A site and with the mRNA backbone. Located at the interface of the 30S and 50S subunits, it traverses the body of the 30S subunit contacting proteins on the other side and probably holding the rRNA structure together. The combined cluster of proteins S8, S12 and S17 appears to hold together the shoulder and platform of the 30S subunit. The protein is Small ribosomal subunit protein uS12 of Nitratidesulfovibrio vulgaris (strain ATCC 29579 / DSM 644 / CCUG 34227 / NCIMB 8303 / VKM B-1760 / Hildenborough) (Desulfovibrio vulgaris).